A 266-amino-acid chain; its full sequence is Stomatin homolog PH1511 (266 aa).

Residues phenylalanine 7–isoleucine 27 form a helical membrane-spanning segment. Coiled coils occupy residues glycine 125 to aspartate 152 and arginine 178 to histidine 213.

This sequence belongs to the band 7/mec-2 family. Homotrimer. Interacts with PH1510 and is cleaved by PH1510.

The protein resides in the membrane. The sequence is that of Stomatin homolog PH1511 from Pyrococcus horikoshii (strain ATCC 700860 / DSM 12428 / JCM 9974 / NBRC 100139 / OT-3).